We begin with the raw amino-acid sequence, 396 residues long: MFCDSFAFAQVMSCFGCFGGSERSRHSPNPYDDDTYSHDSGETSNPGGDDEEGEEEEEVEELSRSKRSEEILKCKLQNGLVCRQFPVKETNKLTRGEDEDGNKTINEFVRERKIGSGSYGKVVLYRSTVDDKHYAIKAFHKSHLSRLRVAPSETAMGDVLREVMIMKTLEHPNIVNLIEVIDDPEFDDFYMVLEYVDGKWAYDDSGPPGALGEITARKYLRDVVAGLMYLHAHNVIHGDIKPDNLLVTSTGRVKIGDFSVSQVFKDDDDQLRRSPGTPVFTAPECCLGITYSGRSADTWAVGVTLYCMILGQYPFLGDTLQDTYDKIVHNPLIIPEGLNPRLRDLIEGLLCKDPNQRMTLKAVAEHPWITGEDGAISEYCCWCKRKAEEEEDQNHS.

The tract at residues 22–65 (ERSRHSPNPYDDDTYSHDSGETSNPGGDDEEGEEEEEVEELSRS) is disordered. The segment covering 48–60 (GDDEEGEEEEEVE) has biased composition (acidic residues). One can recognise a Protein kinase domain in the interval 108-369 (FVRERKIGSG…LKAVAEHPWI (262 aa)). Residues 114 to 122 (IGSGSYGKV) and K137 each bind ATP. Phosphothreonine; by autocatalysis is present on T154. D239 functions as the Proton acceptor in the catalytic mechanism. A Phosphoserine; by KIN10 modification is found at S261.

This sequence belongs to the protein kinase superfamily. Ser/Thr protein kinase family. Associates with the SNF1-related protein kinase (SnRK) complex. Interacts with AL1, a geminivirus (TGMV) protein essential for viral replication. In terms of tissue distribution, expressed in shoot apical meristem, leaf primordium and emerging petiole (at protein level).

It localises to the cytoplasm. It is found in the nucleus. The catalysed reaction is L-seryl-[protein] + ATP = O-phospho-L-seryl-[protein] + ADP + H(+). It catalyses the reaction L-threonyl-[protein] + ATP = O-phospho-L-threonyl-[protein] + ADP + H(+). Its activity is regulated as follows. Activated when autophosphorylated at Thr-154 and inactivated when phosphorylated at Ser-261 by SnRK1.1/KIN10. In terms of biological role, activates SnRK1.1/KIN10 and SnRK1.2/KIN11 by phosphorylation of their activation-loop 'Thr-198' and 'Thr-176', respectively. Required for the regulation by SnRK1 kinases of the transcription of a large set of genes, the modification the activity of metabolic enzymes, and the control of various nutrient-responsive cellular developmental processes. This Arabidopsis thaliana (Mouse-ear cress) protein is Serine/threonine-protein kinase GRIK1 (GRIK1).